The chain runs to 503 residues: ATP synthase subunit alpha (503 aa).

169-176 provides a ligand contact to ATP; sequence GDRKTGKT.

It belongs to the ATPase alpha/beta chains family. In terms of assembly, F-type ATPases have 2 components, CF(1) - the catalytic core - and CF(0) - the membrane proton channel. CF(1) has five subunits: alpha(3), beta(3), gamma(1), delta(1), epsilon(1). CF(0) has three main subunits: a(1), b(2) and c(9-12). The alpha and beta chains form an alternating ring which encloses part of the gamma chain. CF(1) is attached to CF(0) by a central stalk formed by the gamma and epsilon chains, while a peripheral stalk is formed by the delta and b chains.

The protein resides in the cell membrane. The catalysed reaction is ATP + H2O + 4 H(+)(in) = ADP + phosphate + 5 H(+)(out). With respect to regulation, increases 2-fold following exposure to low pH. In terms of biological role, produces ATP from ADP in the presence of a proton gradient across the membrane. The alpha chain is a regulatory subunit. The protein is ATP synthase subunit alpha of Lactobacillus acidophilus (strain ATCC 700396 / NCK56 / N2 / NCFM).